Consider the following 886-residue polypeptide: Probable mixed-linked glucan synthase 8 (886 aa).

Transmembrane regions (helical) follow at residues 87 to 107 (ILLH…VLFF) and 118 to 138 (GMFF…SWLL). The active site involves Asp-213. The substrate site is built by Asp-413 and Asp-415. Residue Asp-577 is part of the active site. The next 6 membrane-spanning stretches (helical) occupy residues 659–679 (VFLL…IFYI), 683–703 (FPTY…IGMV), 723–743 (IIGA…KCFG), 775–795 (LLFP…AAIG), 812–832 (LGLV…LGIM), and 840–860 (YILF…DIAI).

It belongs to the glycosyltransferase 2 family. Plant cellulose synthase-like F subfamily.

The protein resides in the golgi apparatus membrane. In terms of biological role, may catalyze both beta-1,3 and beta-1,4 glycosidic linkage on beta-D-glucan. Essential for (1,3;1,4)-beta-D-glucans synthesis in grasses and cereals (Poaceae). The mixed-linked glucans (which are not present in walls of dicotyledons or most other monocotyledonous plants) are particularly important constituents of the walls of the starchy endosperm and aleurone cells of cereal grains such as oats, wheat, rice and barley. They can account for up to 70% by weight of the wall. In Oryza sativa subsp. japonica (Rice), this protein is Probable mixed-linked glucan synthase 8 (CSFL8).